The following is a 379-amino-acid chain: Citrate synthase (379 aa).

Active-site residues include His-225, His-265, and Asp-316.

The protein belongs to the citrate synthase family. As to quaternary structure, homodimer.

The catalysed reaction is oxaloacetate + acetyl-CoA + H2O = citrate + CoA + H(+). It participates in carbohydrate metabolism; tricarboxylic acid cycle; isocitrate from oxaloacetate: step 1/2. Might regulate the synthesis and function of enzymes involved in later enzymatic steps of Krebs cycle. The polypeptide is Citrate synthase (citZ) (Haloferax volcanii (strain ATCC 29605 / DSM 3757 / JCM 8879 / NBRC 14742 / NCIMB 2012 / VKM B-1768 / DS2) (Halobacterium volcanii)).